Consider the following 288-residue polypeptide: 2-hydroxy-6-oxononadienedioate/2-hydroxy-6-oxononatrienedioate hydrolase (288 aa).

The active-site Proton acceptor is the His267.

The protein belongs to the AB hydrolase superfamily. MhpC family. Homodimer.

It catalyses the reaction (2Z,4E)-2-hydroxy-6-oxonona-2,4-dienedioate + H2O = (2Z)-2-hydroxypenta-2,4-dienoate + succinate + H(+). The enzyme catalyses (2Z,4E,7E)-2-hydroxy-6-oxonona-2,4,7-trienedioate + H2O = (2Z)-2-hydroxypenta-2,4-dienoate + fumarate + H(+). Its pathway is aromatic compound metabolism; 3-phenylpropanoate degradation. Its function is as follows. Catalyzes the cleavage of the C5-C6 bond of 2-hydroxy-6-oxononadienedioate and 2-hydroxy-6-oxononatrienedioate, a dienol ring fission product of the bacterial meta-cleavage pathway for degradation of phenylpropionic acid. The protein is 2-hydroxy-6-oxononadienedioate/2-hydroxy-6-oxononatrienedioate hydrolase of Escherichia coli (strain K12 / DH10B).